The chain runs to 687 residues: SLCO1B3-SLCO1B7 readthrough transcript protein (687 aa).

Topologically, residues 1 to 29 (MDQHQHLNKTAESASSEKKKTRRCNGFKM) are cytoplasmic. The helical transmembrane segment at 30-50 (FLAALSFSYIAKALGGIIMKI) threads the bilayer. At 51–63 (SITQIERRFDISS) the chain is on the extracellular side. A helical membrane pass occupies residues 64–84 (SLAGLIDGSFEIGNLLVIVFV). At 85–96 (SYFGSKLHRPKL) the chain is on the cytoplasmic side. The helical transmembrane segment at 97-117 (IGIGCLLMGTGSILTSLPHFF) threads the bilayer. At 118–170 (MGYYRYSKETNIDPSENSTSNLPNCLINQMLSLNRTPSEIIERGCVKESGSHM) the chain is on the extracellular side. Residues Asn134 and Asn151 are each glycosylated (N-linked (GlcNAc...) asparagine). The chain crosses the membrane as a helical span at residues 171-191 (WIYVFMGNMLRGIGETPIVPL). Residues 192-206 (GISYIDDFAKEGHSS) lie on the Cytoplasmic side of the membrane. Residues 207-227 (LYLGTVNVMGMTGLVFAFMLG) form a helical membrane-spanning segment. The Extracellular portion of the chain corresponds to 228–258 (SLFAKMYVDIGYVDLSTIRITPKDSRWVGAW). The chain crosses the membrane as a helical span at residues 259–279 (WLGFLVSGIVSIISSIPFFFL). Residues 280–339 (PLNPNKPQKERKVSLFLHVLKTNDKRNQIANLTNRRKYITKNVTGFFQSLKSILTNPLYV) lie on the Cytoplasmic side of the membrane. The helical transmembrane segment at 340–360 (IFVIFTLLHMSSYIASLTYII) threads the bilayer. The Extracellular portion of the chain corresponds to 361–376 (KMVEQQYGWSASKTNF). A helical membrane pass occupies residues 377–397 (LLGVLALPAVAIGMFSGGYII). At 398–409 (KKFKLSLVGLAK) the chain is on the cytoplasmic side. Residues 410–430 (LAFCSATVHLLSQVLYFFLIC) traverse the membrane as a helical segment. The Extracellular segment spans residues 431-539 (ESKSVAGLTL…CTRKSYVYFV (109 aa)). Residues 453 to 508 (DVPLSYCNSECNCDESQWEPVCGNNGITYLSPCLAGCKSSSGNKEPIVFYNCSCVE) enclose the Kazal-like domain. Disulfide bonds link Cys459–Cys489, Cys465–Cys485, and Cys474–Cys506. N-linked (GlcNAc...) asparagine glycosylation is found at Asn503 and Asn516. The helical transmembrane segment at 540-560 (IQVLDAFLCAVGLTSYSVLVI) threads the bilayer. Topologically, residues 561-568 (RIVQPELK) are cytoplasmic. The chain crosses the membrane as a helical span at residues 569–589 (ALAIGFHSMIMRSLGGILVPI). Topologically, residues 590–624 (YFGALIDTTCMKWSTNSCGARGACRIYNSTYLGRA) are extracellular. N-linked (GlcNAc...) asparagine glycosylation occurs at Asn617. The chain crosses the membrane as a helical span at residues 625 to 645 (FFGLKVALIFPVLVLLTVFIF). Residues 646 to 687 (VVRKKSHGKDTKVLENERQVMDEANLEFLNDSEHFVPSAEEQ) are Cytoplasmic-facing.

This sequence belongs to the organo anion transporter (TC 2.A.60) family. In terms of tissue distribution, expressed in the perivenular areas (centrilobular) of the liver (at protein level).

Its subcellular location is the smooth endoplasmic reticulum membrane. It localises to the cell membrane. It is found in the endoplasmic reticulum membrane. The catalysed reaction is 17beta-estradiol 17-O-(beta-D-glucuronate)(out) = 17beta-estradiol 17-O-(beta-D-glucuronate)(in). It catalyses the reaction dehydroepiandrosterone 3-sulfate(out) = dehydroepiandrosterone 3-sulfate(in). It carries out the reaction taurocholate(out) = taurocholate(in). The enzyme catalyses lithocholate(out) = lithocholate(in). Its activity is regulated as follows. Transport activity is induced by farnesoid X receptor (FXR) agonists such as chenodeoxycholate. In terms of biological role, mediates the Na(+)-independent uptake of organic anions. Transports the conjugated steroids 17-beta-glucuronosyl estradiol (17beta-estradiol 17-O-(beta-D-glucuronate) or E2G) and dehydroepiandrosterone 3-sulfate (DHEAS) at the smooth endoplasmic reticulum membrane (SER), granting access to metabolizing enzymes. Contributes to the metabolism of bile acids such as taurocholate (cholyltaurine) and lithocholate, by functioning as a doorway between SER and cytosol, thereby decreasing their circulating levels and protecting the organism from their detergent properties. Regulates access or exit of drugs to the SER lumen. The polypeptide is SLCO1B3-SLCO1B7 readthrough transcript protein (Homo sapiens (Human)).